The sequence spans 408 residues: Probable 2,3-bisphosphoglycerate-independent phosphoglycerate mutase (408 aa).

The protein belongs to the BPG-independent phosphoglycerate mutase family. A-PGAM subfamily.

The catalysed reaction is (2R)-2-phosphoglycerate = (2R)-3-phosphoglycerate. The protein operates within carbohydrate degradation; glycolysis; pyruvate from D-glyceraldehyde 3-phosphate: step 3/5. Its function is as follows. Catalyzes the interconversion of 2-phosphoglycerate and 3-phosphoglycerate. The sequence is that of Probable 2,3-bisphosphoglycerate-independent phosphoglycerate mutase from Deinococcus geothermalis (strain DSM 11300 / CIP 105573 / AG-3a).